The sequence spans 502 residues: Solute carrier family 2, facilitated glucose transporter member 5 (502 aa).

Met-1 carries the post-translational modification N-acetylmethionine. Topologically, residues 1 to 17 (MEKEDQEKTGKLTLVLA) are cytoplasmic. The chain crosses the membrane as a helical span at residues 18–38 (LATFLAAFGSSFQYGYNVAAV). A D-fructose-binding site is contributed by Tyr-31. At 39-67 (NSPSEFMQQFYNDTYYDRNKENIESFTLT) the chain is on the extracellular side. The N-linked (GlcNAc...) asparagine glycan is linked to Asn-50. The chain crosses the membrane as a helical span at residues 68–90 (LLWSLTVSMFPFGGFIGSLMVGF). Over 91 to 97 (LVNNLGR) the chain is Cytoplasmic. Residues 98–118 (KGALLFNNIFSILPAILMGCS) traverse the membrane as a helical segment. At 119–125 (KIAKSFE) the chain is on the extracellular side. The helical transmembrane segment at 126-148 (IIIASRLLVGICAGISSNVVPMY) threads the bilayer. The Cytoplasmic segment spans residues 149–160 (LGELAPKNLRGA). A helical membrane pass occupies residues 161-181 (LGVVPQLFITVGILVAQLFGL). Gln-166 is a binding site for D-fructose. Topologically, residues 182-191 (RSVLASEEGW) are extracellular. Residues 192-212 (PILLGLTGVPAGLQLLLLPFF) traverse the membrane as a helical segment. The Cytoplasmic segment spans residues 213–276 (PESPRYLLIQ…LFRMQSLRWQ (64 aa)). A helical membrane pass occupies residues 277–297 (LISTIVLMAGQQLSGVNAIYY). Residues Gln-287 and 295 to 297 (IYY) contribute to the D-fructose site. Residues 298 to 312 (YADQIYLSAGVKSND) lie on the Extracellular side of the membrane. The helical transmembrane segment at 313 to 333 (VQYVTAGTGAVNVFMTMVTVF) threads the bilayer. The Cytoplasmic portion of the chain corresponds to 334 to 341 (VVELWGRR). Residues 342-362 (NLLLIGFSTCLTACIVLTVAL) traverse the membrane as a helical segment. Residues 363–370 (ALQNTISW) lie on the Extracellular side of the membrane. A helical membrane pass occupies residues 371 to 393 (MPYVSIVCVIVYVIGHAVGPSPI). His-386 is a binding site for D-fructose. Over 394–411 (PALFITEIFLQSSRPSAY) the chain is Cytoplasmic. Residues 412–432 (MIGGSVHWLSNFIVGLIFPFI) traverse the membrane as a helical segment. D-fructose is bound at residue 418 to 419 (HW). The Extracellular portion of the chain corresponds to 433–438 (QVGLGP). A helical membrane pass occupies residues 439-459 (YSFIIFAIICLLTTIYIFMVV). Residues 460–502 (PETKGRTFVEINQIFAKKNKVSDVYPEKEEKELNDLPPATREQ) are Cytoplasmic-facing.

It belongs to the major facilitator superfamily. Sugar transporter (TC 2.A.1.1) family. Glucose transporter subfamily. In terms of tissue distribution, detected in jejunum. Detected in kidney, skeletal muscle, brain and adipose tissue (at protein level). Detected in small intestine and in kidney, and at much lower levels in brain. Detected in enterocytes in duodenum, jejunum, and ileum.

It localises to the apical cell membrane. The protein resides in the cell membrane. The protein localises to the sarcolemma. The catalysed reaction is D-fructose(out) = D-fructose(in). Fructose uptake is inhibited by mercury ions. Fructose uptake is only slightly inhibited by cytochalasin B. Functions as a fructose transporter that has only low activity with other monosaccharides. Can mediate the uptake of deoxyglucose, but with low efficiency. Essential for fructose uptake in the small intestine. Plays a role in the regulation of salt uptake and blood pressure in response to dietary fructose. Required for the development of high blood pressure in response to high dietary fructose intake. The chain is Solute carrier family 2, facilitated glucose transporter member 5 from Rattus norvegicus (Rat).